Consider the following 236-residue polypeptide: Phosphoribosylaminoimidazole-succinocarboxamide synthase (236 aa).

This sequence belongs to the SAICAR synthetase family.

The enzyme catalyses 5-amino-1-(5-phospho-D-ribosyl)imidazole-4-carboxylate + L-aspartate + ATP = (2S)-2-[5-amino-1-(5-phospho-beta-D-ribosyl)imidazole-4-carboxamido]succinate + ADP + phosphate + 2 H(+). Its pathway is purine metabolism; IMP biosynthesis via de novo pathway; 5-amino-1-(5-phospho-D-ribosyl)imidazole-4-carboxamide from 5-amino-1-(5-phospho-D-ribosyl)imidazole-4-carboxylate: step 1/2. The sequence is that of Phosphoribosylaminoimidazole-succinocarboxamide synthase from Rickettsia canadensis (strain McKiel).